The following is a 424-amino-acid chain: Serine--tRNA ligase (424 aa).

229–231 (TAE) serves as a coordination point for L-serine. Residue 260 to 262 (RSE) coordinates ATP. Residue Glu-283 participates in L-serine binding. 347–350 (EISS) is a binding site for ATP. L-serine is bound at residue Ser-383.

The protein belongs to the class-II aminoacyl-tRNA synthetase family. Type-1 seryl-tRNA synthetase subfamily. In terms of assembly, homodimer. The tRNA molecule binds across the dimer.

Its subcellular location is the cytoplasm. It carries out the reaction tRNA(Ser) + L-serine + ATP = L-seryl-tRNA(Ser) + AMP + diphosphate + H(+). It catalyses the reaction tRNA(Sec) + L-serine + ATP = L-seryl-tRNA(Sec) + AMP + diphosphate + H(+). It participates in aminoacyl-tRNA biosynthesis; selenocysteinyl-tRNA(Sec) biosynthesis; L-seryl-tRNA(Sec) from L-serine and tRNA(Sec): step 1/1. Catalyzes the attachment of serine to tRNA(Ser). Is also able to aminoacylate tRNA(Sec) with serine, to form the misacylated tRNA L-seryl-tRNA(Sec), which will be further converted into selenocysteinyl-tRNA(Sec). The protein is Serine--tRNA ligase of Gluconacetobacter diazotrophicus (strain ATCC 49037 / DSM 5601 / CCUG 37298 / CIP 103539 / LMG 7603 / PAl5).